The following is a 480-amino-acid chain: F-box only protein 3 (480 aa).

One can recognise an F-box domain in the interval 10-56 (LLTLESLPTDPLLLILSFVDYRDLINCCYVSRRLSQLSTHDPLWRRH). Residues 278-408 (VATTGDITVS…FHMACPTFRV (131 aa)) enclose the ApaG domain. Acidic residues predominate over residues 419 to 459 (EYEEMEEEAEEEEEEENDDSADMDESDESDEDENESDEGEG). Residues 419–464 (EYEEMEEEAEEEEEEENDDSADMDESDESDEDENESDEGEGEERRR) are disordered.

In terms of assembly, part of a SCF (SKP1-cullin-F-box) protein ligase complex SCF(FBXO3) consisting of FBXO3, SKP1, CUL1 and RBX1. Interacts with PML, interaction is direct and takes place either alone or within the SCF complex.

The protein localises to the nucleus. It functions in the pathway protein modification; protein ubiquitination. Functionally, substrate recognition component of the SCF (SKP1-CUL1-F-box protein)-type E3 ubiquitin ligase complex, SCF(FBXO3), which mediates the ubiquitination and subsequent proteasomal degradation of target proteins. Mediates the ubiquitination of HIPK2 and probably that of EP300, leading to rapid degradation by the proteasome. In the presence of PML, HIPK2 ubiquitination still occurs, but degradation is prevented. PML, HIPK2 and FBXO3 may act synergically to activate p53/TP53-dependent transactivation. The SCF(FBXO3) also acts as a regulator of inflammation by mediating ubiquitination and degradation of FBXL2 in response to lipopolysaccharide (LPS). The SCF(FBXO3) complex specifically recognizes FBXL2 phosphorylated at 'Thr-404' and promotes its ubiquitination. This Rattus norvegicus (Rat) protein is F-box only protein 3 (Fbxo3).